A 76-amino-acid chain; its full sequence is uncharacterized protein (76 aa).

The region spanning L6–F60 is the HTH cro/C1-type domain. Positions Q17–N36 form a DNA-binding region, H-T-H motif.

This is an uncharacterized protein from Bacillus subtilis (strain 168).